Reading from the N-terminus, the 1465-residue chain is DNA polymerase III polC-type (1465 aa).

The region spanning 427-583 (YVVFDVETTG…YDAEATGRLL (157 aa)) is the Exonuclease domain.

Belongs to the DNA polymerase type-C family. PolC subfamily.

It is found in the cytoplasm. It carries out the reaction DNA(n) + a 2'-deoxyribonucleoside 5'-triphosphate = DNA(n+1) + diphosphate. Its function is as follows. Required for replicative DNA synthesis. This DNA polymerase also exhibits 3' to 5' exonuclease activity. This Streptococcus pyogenes serotype M3 (strain ATCC BAA-595 / MGAS315) protein is DNA polymerase III polC-type.